We begin with the raw amino-acid sequence, 445 residues long: MNRHLCVWLFRHPSLNGYLQCHIQLHSHQFRQIHLDTRLQVFRQNRNCILHLLSKNWSRRYCHQDTKMLWKHKALQKYMENLSKEYQTLEQCLQHIPVNEENRRSLNRRHAELAPLAAIYQEIQETEQAIEELESMCKSLNKQDEKQLQELALEERQTIDQKINMLYNELFQSLVPKEKYDKNDVILEVTAGRTTGGDICQQFTREIFDMYQNYSCYKHWQFELLNYTPADYGGLHHAAARISGDGVYKHLKYEGGIHRVQRIPEVGLSSRMQRIHTGTMSVIVLPQPDEVDVKLDPKDLRIDTFRAKGAGGQHVNKTDSAVRLVHIPTGLVVECQQERSQIKNKEIAFRVLRARLYQQIIEKDKRQQQSARKLQVGTRAQSERIRTYNFTQDRVSDHRIAYEVRDIKEFLCGGKGLDQLIQRLLQSADEEAIAELLDEHLKSAK.

The transit peptide at 1–61 directs the protein to the mitochondrion; it reads MNRHLCVWLF…LLSKNWSRRY (61 aa). The interval 297 to 361 is GGQ domain; it reads PKDLRIDTFR…LRARLYQQII (65 aa). The GGQ motif lies at 311–313; it reads GGQ. Gln313 bears the N5-methylglutamine mark.

Belongs to the prokaryotic/mitochondrial release factor family. Methylation of glutamine in the GGQ triplet by HEMK1 is conserved from bacteria to mammals.

Its subcellular location is the mitochondrion. In terms of biological role, mitochondrial peptide chain release factor that directs the termination of translation in response to the peptide chain non-canonical stop codons AGG and AGA. Non-canonical termination codons AGG and AGA are found at the end of MT-CO1/COX1 and MT-ND6/ND6 open reading frames, respectively. Recognizes non-canonical stop codons via a network of interactions between the codon, MTRF1 and the ribosomal RNA (rRNA): in contrast to other translation release factors, which identify the codon in the A-site via direct interactions of amino acid side chains with the bases, MTRF1 repositions the first 2 bases of the stop codon to use an intricate network of interactions that includes residues of the release factor, the rRNA of the small ribosomal subunit, as well as neighboring bases of the mRNA. The polypeptide is Peptide chain release factor 1, mitochondrial (Homo sapiens (Human)).